The sequence spans 471 residues: Alpha-galactosidase (471 aa).

The first 18 residues, 1 to 18 (MFNLNFFNYTCHCEWCFW), serve as a signal peptide directing secretion. A disulfide bridge connects residues Cys-42 and Cys-74. N-linked (GlcNAc...) asparagine glycosylation is present at Asn-43. Substrate-binding residues include Asp-72 and Asp-73. N-linked (GlcNAc...) asparagine glycosylation occurs at Asn-105. An intrachain disulfide couples Cys-121 to Cys-151. Lys-147 is a substrate binding site. Asp-149 serves as the catalytic Nucleophile. The N-linked (GlcNAc...) asparagine glycan is linked to Asn-175. Arg-205 serves as a coordination point for substrate. Asp-209 acts as the Proton donor in catalysis. 2 cysteine pairs are disulfide-bonded: Cys-221-Cys-237 and Cys-223-Cys-230. Gln-251 serves as a coordination point for substrate. Residues Asn-270, Asn-370, Asn-403, Asn-417, Asn-422, and Asn-454 are each glycosylated (N-linked (GlcNAc...) asparagine).

It belongs to the glycosyl hydrolase 27 family. As to quaternary structure, homotetramer.

The protein resides in the secreted. It catalyses the reaction Hydrolysis of terminal, non-reducing alpha-D-galactose residues in alpha-D-galactosides, including galactose oligosaccharides, galactomannans and galactolipids.. This Saccharomyces paradoxus (Yeast) protein is Alpha-galactosidase (MEL).